The primary structure comprises 335 residues: Beta-ketoacyl-[acyl-carrier-protein] synthase III (335 aa).

Active-site residues include Cys118 and His259. The ACP-binding stretch occupies residues 260–264 (QANER). The active site involves Asn289.

Belongs to the thiolase-like superfamily. FabH family. Homodimer.

The protein resides in the cytoplasm. It catalyses the reaction malonyl-[ACP] + acetyl-CoA + H(+) = 3-oxobutanoyl-[ACP] + CO2 + CoA. The protein operates within lipid metabolism; fatty acid biosynthesis. Its function is as follows. Catalyzes the condensation reaction of fatty acid synthesis by the addition to an acyl acceptor of two carbons from malonyl-ACP. Catalyzes the first condensation reaction which initiates fatty acid synthesis and may therefore play a role in governing the total rate of fatty acid production. Possesses both acetoacetyl-ACP synthase and acetyl transacylase activities. Its substrate specificity determines the biosynthesis of branched-chain and/or straight-chain of fatty acids. The protein is Beta-ketoacyl-[acyl-carrier-protein] synthase III of Chlamydia caviae (strain ATCC VR-813 / DSM 19441 / 03DC25 / GPIC) (Chlamydophila caviae).